The primary structure comprises 101 residues: Small ribosomal subunit protein uS14 (101 aa).

It belongs to the universal ribosomal protein uS14 family. As to quaternary structure, part of the 30S ribosomal subunit. Contacts proteins S3 and S10.

Functionally, binds 16S rRNA, required for the assembly of 30S particles and may also be responsible for determining the conformation of the 16S rRNA at the A site. In Pasteurella multocida (strain Pm70), this protein is Small ribosomal subunit protein uS14.